Consider the following 220-residue polypeptide: MQKEITINYNEYTIGGIKGTFFGNSQYEANYRAKINGFIIDFFKIPISLKKKYELNIKALSDPNFSSTNIAMNCINTFKLIVDIVNMQTGENYDYDTFITKTDTEKMLKYGTKIIAALARHFDEQNKTNFNESYYEWEKGWIDKKWINYEPTAEEIKEIQIMNQKLNPLKLKHRKKNLNNGQIRLLQAINKIEDQSQQQATKSNSKTKKLKGNHGEKTKI.

Positions aspartate 194 to isoleucine 220 are disordered. The span at glutamine 195 to asparagine 204 shows a compositional bias: polar residues.

This is an uncharacterized protein from Borreliella burgdorferi (strain ATCC 35210 / DSM 4680 / CIP 102532 / B31) (Borrelia burgdorferi).